Reading from the N-terminus, the 382-residue chain is Chaperone protein DnaJ (382 aa).

One can recognise a J domain in the interval 5–70 (DYYELLGVQK…EKRAAYDRYG (66 aa)). The CR-type zinc-finger motif lies at 146–224 (GAEKEISFRK…CHGEGRVRRT (79 aa)). Residues cysteine 159, cysteine 162, cysteine 176, cysteine 179, cysteine 198, cysteine 201, cysteine 212, and cysteine 215 each contribute to the Zn(2+) site. CXXCXGXG motif repeat units lie at residues 159 to 166 (CERCDGSG), 176 to 183 (CPTCRGAG), 198 to 205 (CPTCGGMG), and 212 to 219 (CTVCHGEG). Residues 230–250 (RIPPGVDNGSRLRSSGNGEAG) form a disordered region.

It belongs to the DnaJ family. In terms of assembly, homodimer. It depends on Zn(2+) as a cofactor.

The protein resides in the cytoplasm. Participates actively in the response to hyperosmotic and heat shock by preventing the aggregation of stress-denatured proteins and by disaggregating proteins, also in an autonomous, DnaK-independent fashion. Unfolded proteins bind initially to DnaJ; upon interaction with the DnaJ-bound protein, DnaK hydrolyzes its bound ATP, resulting in the formation of a stable complex. GrpE releases ADP from DnaK; ATP binding to DnaK triggers the release of the substrate protein, thus completing the reaction cycle. Several rounds of ATP-dependent interactions between DnaJ, DnaK and GrpE are required for fully efficient folding. Also involved, together with DnaK and GrpE, in the DNA replication of plasmids through activation of initiation proteins. This chain is Chaperone protein DnaJ, found in Opitutus terrae (strain DSM 11246 / JCM 15787 / PB90-1).